A 204-amino-acid polypeptide reads, in one-letter code: Large ribosomal subunit protein eL15 (204 aa).

Residues 172 to 182 show a composition bias toward basic residues; it reads RGLRGRGHLHN. The disordered stretch occupies residues 172-204; it reads RGLRGRGHLHNKAPPSRRANWKRNQTLSLPRYR. The segment covering 193-204 has biased composition (polar residues); it reads KRNQTLSLPRYR.

Belongs to the eukaryotic ribosomal protein eL15 family.

This chain is Large ribosomal subunit protein eL15 (RPL15), found in Petunia hybrida (Petunia).